A 216-amino-acid chain; its full sequence is Minor capsid protein P6 (216 aa).

Residues 1–21 are hydrophobic; the sequence is MILVGIAVLILLAVFAILYYK.

As to quaternary structure, interacts with the major capsid protein.

The protein localises to the virion. One of the minor capsid proteins that constitute a network internal to the major capsid proteins and outside the lipid membrane. The minor capsid proteins glue and stabilize the capsomers. In Paramecium bursaria Chlorella virus 1 (PBCV-1), this protein is Minor capsid protein P6.